The sequence spans 168 residues: Cell division inhibitor SulA (168 aa).

The ftsZ binding stretch occupies residues 105–111 (ALETGNY). The tract at residues 161–168 (RIHSGMVH) is lon protease binding.

The protein belongs to the SulA family. As to quaternary structure, interacts with FtsZ. In terms of processing, is rapidly cleaved and degraded by the Lon protease once DNA damage is repaired.

Component of the SOS system and an inhibitor of cell division. Accumulation of SulA causes rapid cessation of cell division and the appearance of long, non-septate filaments. In the presence of GTP, binds a polymerization-competent form of FtsZ in a 1:1 ratio, thus inhibiting FtsZ polymerization and therefore preventing it from participating in the assembly of the Z ring. This mechanism prevents the premature segregation of damaged DNA to daughter cells during cell division. In Cronobacter sakazakii (strain ATCC BAA-894) (Enterobacter sakazakii), this protein is Cell division inhibitor SulA.